The sequence spans 229 residues: Ribonuclease 3 (229 aa).

Positions 4 to 133 constitute an RNase III domain; sequence WEELQESVGF…FIGALYLDNG (130 aa). A Mg(2+)-binding site is contributed by E46. D50 is an active-site residue. Residues D119 and E122 each coordinate Mg(2+). The active site involves E122. The DRBM domain occupies 159–228; the sequence is DYKTQLQEIV…AQFAINKLIH (70 aa).

This sequence belongs to the ribonuclease III family. As to quaternary structure, homodimer. The cofactor is Mg(2+).

Its subcellular location is the cytoplasm. It carries out the reaction Endonucleolytic cleavage to 5'-phosphomonoester.. In terms of biological role, digests double-stranded RNA. Involved in the processing of primary rRNA transcript to yield the immediate precursors to the large and small rRNAs (23S and 16S). Processes some mRNAs, and tRNAs when they are encoded in the rRNA operon. Processes pre-crRNA and tracrRNA of type II CRISPR loci if present in the organism. This is Ribonuclease 3 from Listeria monocytogenes serovar 1/2a (strain ATCC BAA-679 / EGD-e).